A 159-amino-acid chain; its full sequence is Immunoglobulin J chain (159 aa).

The N-terminal stretch at 1–22 (MKNHLLFWGVLAVFIKAVHVKA) is a signal peptide. Gln23 carries the post-translational modification Pyrrolidone carboxylic acid. 3 disulfide bridges follow: Cys35-Cys123, Cys94-Cys114, and Cys131-Cys156. Residue Asn71 is glycosylated (N-linked (GlcNAc...) (complex) asparagine).

As to quaternary structure, part of the secretory IgA (sIgA) complex that consists of two, four or five IgA monomers, and two additional non-Ig polypeptides, namely the JCHAIN and the secretory component (the proteolytic product of PIGR). Part of the secretory IgM (sIgM) complex that consists of five IgM monomers, and two additional non-Ig polypeptides, namely the JCHAIN and the secretory component (the proteolytic product of PIGR). JCHAIN-containing IgM interacts (via CH4 domain) with FCRM (via Ig-like domain).

Its subcellular location is the secreted. Its function is as follows. Serves to link two monomer units of either IgM or IgA. In the case of IgM, the J chain-joined dimer is a nucleating unit for the IgM pentamer, and in the case of IgA it induces dimers and/or larger polymers. It also helps to bind these immunoglobulins to secretory component. The polypeptide is Immunoglobulin J chain (Homo sapiens (Human)).